Consider the following 30-residue polypeptide: NADH-ubiquinone oxidoreductase chain 5 (30 aa).

Residues 7-27 (NIIIIINSSLIIILFSSIFFF) traverse the membrane as a helical segment.

It belongs to the complex I subunit 5 family.

It localises to the mitochondrion inner membrane. The catalysed reaction is a ubiquinone + NADH + 5 H(+)(in) = a ubiquinol + NAD(+) + 4 H(+)(out). Its function is as follows. Core subunit of the mitochondrial membrane respiratory chain NADH dehydrogenase (Complex I) that is believed to belong to the minimal assembly required for catalysis. Complex I functions in the transfer of electrons from NADH to the respiratory chain. The immediate electron acceptor for the enzyme is believed to be ubiquinone. The polypeptide is NADH-ubiquinone oxidoreductase chain 5 (ND5) (Pisaster ochraceus (Ochre sea star)).